A 393-amino-acid chain; its full sequence is Dual-specificity RNA methyltransferase RlmN (393 aa).

The active-site Proton acceptor is the Glu115. In terms of domain architecture, Radical SAM core spans 121–365 (EEDRGTLCIS…APIRKTRGDD (245 aa)). Cysteines 128 and 370 form a disulfide. The [4Fe-4S] cluster site is built by Cys135, Cys139, and Cys142. S-adenosyl-L-methionine is bound by residues 194-195 (GE), Ser226, 248-250 (SFH), and Asn327. The active-site S-methylcysteine intermediate is Cys370.

It belongs to the radical SAM superfamily. RlmN family. Requires [4Fe-4S] cluster as cofactor.

The protein resides in the cytoplasm. It catalyses the reaction adenosine(2503) in 23S rRNA + 2 reduced [2Fe-2S]-[ferredoxin] + 2 S-adenosyl-L-methionine = 2-methyladenosine(2503) in 23S rRNA + 5'-deoxyadenosine + L-methionine + 2 oxidized [2Fe-2S]-[ferredoxin] + S-adenosyl-L-homocysteine. The enzyme catalyses adenosine(37) in tRNA + 2 reduced [2Fe-2S]-[ferredoxin] + 2 S-adenosyl-L-methionine = 2-methyladenosine(37) in tRNA + 5'-deoxyadenosine + L-methionine + 2 oxidized [2Fe-2S]-[ferredoxin] + S-adenosyl-L-homocysteine. Its function is as follows. Specifically methylates position 2 of adenine 2503 in 23S rRNA and position 2 of adenine 37 in tRNAs. m2A2503 modification seems to play a crucial role in the proofreading step occurring at the peptidyl transferase center and thus would serve to optimize ribosomal fidelity. The protein is Dual-specificity RNA methyltransferase RlmN of Ruegeria pomeroyi (strain ATCC 700808 / DSM 15171 / DSS-3) (Silicibacter pomeroyi).